The primary structure comprises 132 residues: Ig kappa chain V-III region MOPC 321 (132 aa).

Positions 1–20 (METDTLLLWVLLLWVPGSTG) are cleaved as a signal peptide. The framework-1 stretch occupies residues 21–43 (DIVLTQSPASLAVSLGQRATISC). A disulfide bridge links cysteine 43 with cysteine 112. The interval 44–58 (RASKSVNTYGNSFMZ) is complementarity-determining-1. Positions 59 to 73 (WYZZKPGZPPKLLIY) are framework-2. The tract at residues 74–80 (RASNLZS) is complementarity-determining-2. The framework-3 stretch occupies residues 81-112 (GIPARFSGSGSRTBFTLTIBPVZABDVATYFC). The complementarity-determining-3 stretch occupies residues 113–121 (ZZSBZBPWT). The interval 122–131 (FGSGTKLEIK) is framework-4.

The sequence is that of Ig kappa chain V-III region MOPC 321 from Mus musculus (Mouse).